Here is a 331-residue protein sequence, read N- to C-terminus: Glycerol-3-phosphate dehydrogenase [NAD(P)+] (331 aa).

The NADPH site is built by tryptophan 11, arginine 30, and lysine 105. The sn-glycerol 3-phosphate site is built by lysine 105, glycine 134, and serine 136. Position 138 (alanine 138) interacts with NADPH. 5 residues coordinate sn-glycerol 3-phosphate: lysine 189, aspartate 242, serine 252, arginine 253, and asparagine 254. Lysine 189 acts as the Proton acceptor in catalysis. Arginine 253 is an NADPH binding site. Valine 277 and glutamate 279 together coordinate NADPH.

It belongs to the NAD-dependent glycerol-3-phosphate dehydrogenase family.

It localises to the cytoplasm. The catalysed reaction is sn-glycerol 3-phosphate + NAD(+) = dihydroxyacetone phosphate + NADH + H(+). The enzyme catalyses sn-glycerol 3-phosphate + NADP(+) = dihydroxyacetone phosphate + NADPH + H(+). The protein operates within membrane lipid metabolism; glycerophospholipid metabolism. Functionally, catalyzes the reduction of the glycolytic intermediate dihydroxyacetone phosphate (DHAP) to sn-glycerol 3-phosphate (G3P), the key precursor for phospholipid synthesis. The sequence is that of Glycerol-3-phosphate dehydrogenase [NAD(P)+] from Janthinobacterium sp. (strain Marseille) (Minibacterium massiliensis).